Here is a 114-residue protein sequence, read N- to C-terminus: Protein yippee-like (114 aa).

The region spanning 14–111 is the Yippee domain; sequence RTYSCVHCRA…IELAHMIKEN (98 aa). Residues cysteine 18, cysteine 21, cysteine 74, and cysteine 77 each contribute to the Zn(2+) site.

Belongs to the yippee family.

Functionally, involved in regulating synaptic transmission in presynaptic neurons. In class IV dendritic arborization neurons (nociceptors), involved in regulating activation of their second-order neurons (SONs) and maintaining synaptic contact between nociceptors and their SONs. The protein is Protein yippee-like of Drosophila melanogaster (Fruit fly).